The chain runs to 293 residues: Urease accessory protein UreD (293 aa).

The interval 1–22 (MAVAQQAWSPGADPAPSAAPVS) is disordered. Low complexity predominate over residues 7-22 (AWSPGADPAPSAAPVS).

This sequence belongs to the UreD family. In terms of assembly, ureD, UreF and UreG form a complex that acts as a GTP-hydrolysis-dependent molecular chaperone, activating the urease apoprotein by helping to assemble the nickel containing metallocenter of UreC. The UreE protein probably delivers the nickel.

It localises to the cytoplasm. In terms of biological role, required for maturation of urease via the functional incorporation of the urease nickel metallocenter. The chain is Urease accessory protein UreD from Alkalilimnicola ehrlichii (strain ATCC BAA-1101 / DSM 17681 / MLHE-1).